A 277-amino-acid polypeptide reads, in one-letter code: Undecaprenyl-diphosphatase (277 aa).

A run of 7 helical transmembrane segments spans residues 3–23 (IVLL…EFLP), 43–63 (VGKV…ILVY), 85–105 (LNVL…GKAI), 109–129 (LFTP…ILWA), 189–209 (TDFS…YSLF), 218–238 (ADLP…WLCI), and 249–269 (SFVG…ATAW).

The protein belongs to the UppP family.

It is found in the cell inner membrane. The enzyme catalyses di-trans,octa-cis-undecaprenyl diphosphate + H2O = di-trans,octa-cis-undecaprenyl phosphate + phosphate + H(+). Catalyzes the dephosphorylation of undecaprenyl diphosphate (UPP). Confers resistance to bacitracin. The chain is Undecaprenyl-diphosphatase from Albidiferax ferrireducens (strain ATCC BAA-621 / DSM 15236 / T118) (Rhodoferax ferrireducens).